The sequence spans 216 residues: Octanoyltransferase (216 aa).

In terms of domain architecture, BPL/LPL catalytic spans 24–212; that stretch reads KFRKECILFL…NLCSFLEPIN (189 aa). Substrate contacts are provided by residues 69-76, 140-142, and 153-155; these read RGGDFTAH, SIG, and GIA. Cys-171 functions as the Acyl-thioester intermediate in the catalytic mechanism.

The protein belongs to the LipB family.

It localises to the cytoplasm. It catalyses the reaction octanoyl-[ACP] + L-lysyl-[protein] = N(6)-octanoyl-L-lysyl-[protein] + holo-[ACP] + H(+). The protein operates within protein modification; protein lipoylation via endogenous pathway; protein N(6)-(lipoyl)lysine from octanoyl-[acyl-carrier-protein]: step 1/2. Catalyzes the transfer of endogenously produced octanoic acid from octanoyl-acyl-carrier-protein onto the lipoyl domains of lipoate-dependent enzymes. Lipoyl-ACP can also act as a substrate although octanoyl-ACP is likely to be the physiological substrate. This Leptospira interrogans serogroup Icterohaemorrhagiae serovar Lai (strain 56601) protein is Octanoyltransferase.